The primary structure comprises 1035 residues: Tyrosine-protein kinase-like otk (1035 aa).

The signal sequence occupies residues 1-23 (MDMDVMMISMCILASTLMAPGWA). Ig-like C2-type domains follow at residues 24–109 (STSG…REAS), 110–199 (PPAK…RVMS), 251–365 (PEDL…APLN), 368–464 (PGLL…VSIN), and 469–559 (PKFS…VQLV). At 24-582 (STSGFLRVPQ…GGDGFLVTRA (559 aa)) the chain is on the extracellular side. Disulfide bonds link Cys-47–Cys-96, Cys-138–Cys-188, Cys-276–Cys-354, Cys-399–Cys-448, and Cys-491–Cys-543. Asn-336, Asn-418, Asn-430, Asn-445, Asn-513, and Asn-525 each carry an N-linked (GlcNAc...) asparagine glycan. The chain crosses the membrane as a helical span at residues 583–603 (VLITMTVALAYIVLVVGLMLW). Topologically, residues 604 to 1035 (CRYRRQARKA…SKAMQSVAEK (432 aa)) are cytoplasmic. Disordered stretches follow at residues 623 to 683 (AGGD…KSVY) and 721 to 775 (AQSD…KEEE). A compositionally biased stretch (polar residues) spans 658–676 (KSNGDAQKSDDTACSQQSR). Ser-681 is subject to Phosphoserine. The Protein kinase; inactive domain maps to 693 to 1029 (LSELLQIGRG…QLGSALSKAM (337 aa)). Residues 723–734 (SDKDADTEKQHS) are compositionally biased toward basic and acidic residues. A compositionally biased stretch (acidic residues) spans 766 to 775 (DDIEEIKEEE).

Belongs to the protein kinase superfamily. Tyr protein kinase family. Insulin receptor subfamily. In terms of assembly, interacts with plexA; component of a receptor complex that mediates the repulsive signaling in response to Semaphorin ligands.

The protein localises to the cell membrane. In terms of biological role, acts as a calcium-dependent, homophilic cell adhesion molecule that regulates neural recognition during the development of the nervous system. Component of the repulsive Plexin signaling response to regulate motor axon guidance at the embryonic stage. Also component of a receptor complex that is required in the adult visual system to innervate the lamina layer; specific targeting of R1-R6 axons. This chain is Tyrosine-protein kinase-like otk, found in Drosophila persimilis (Fruit fly).